A 269-amino-acid chain; its full sequence is Formamidopyrimidine-DNA glycosylase (269 aa).

Catalysis depends on Pro2, which acts as the Schiff-base intermediate with DNA. Glu3 functions as the Proton donor in the catalytic mechanism. Catalysis depends on Lys57, which acts as the Proton donor; for beta-elimination activity. The DNA site is built by His90, Arg109, and Lys150. Residues 235-269 (QVYGRKGEPCRVCGTPIVATKHAQRATFYCRQCQK) form an FPG-type zinc finger. Arg259 serves as the catalytic Proton donor; for delta-elimination activity.

Belongs to the FPG family. As to quaternary structure, monomer. It depends on Zn(2+) as a cofactor.

The enzyme catalyses Hydrolysis of DNA containing ring-opened 7-methylguanine residues, releasing 2,6-diamino-4-hydroxy-5-(N-methyl)formamidopyrimidine.. The catalysed reaction is 2'-deoxyribonucleotide-(2'-deoxyribose 5'-phosphate)-2'-deoxyribonucleotide-DNA = a 3'-end 2'-deoxyribonucleotide-(2,3-dehydro-2,3-deoxyribose 5'-phosphate)-DNA + a 5'-end 5'-phospho-2'-deoxyribonucleoside-DNA + H(+). Involved in base excision repair of DNA damaged by oxidation or by mutagenic agents. Acts as a DNA glycosylase that recognizes and removes damaged bases. Has a preference for oxidized purines, such as 7,8-dihydro-8-oxoguanine (8-oxoG). Has AP (apurinic/apyrimidinic) lyase activity and introduces nicks in the DNA strand. Cleaves the DNA backbone by beta-delta elimination to generate a single-strand break at the site of the removed base with both 3'- and 5'-phosphates. The chain is Formamidopyrimidine-DNA glycosylase from Escherichia coli (strain 55989 / EAEC).